We begin with the raw amino-acid sequence, 420 residues long: D-tagatose-1,6-bisphosphate aldolase subunit GatZ (420 aa).

The protein belongs to the GatZ/KbaZ family. GatZ subfamily. In terms of assembly, forms a complex with GatY.

The protein operates within carbohydrate metabolism; D-tagatose 6-phosphate degradation; D-glyceraldehyde 3-phosphate and glycerone phosphate from D-tagatose 6-phosphate: step 2/2. Component of the tagatose-1,6-bisphosphate aldolase GatYZ that is required for full activity and stability of the Y subunit. Could have a chaperone-like function for the proper and stable folding of GatY. When expressed alone, GatZ does not show any aldolase activity. Is involved in the catabolism of galactitol. The polypeptide is D-tagatose-1,6-bisphosphate aldolase subunit GatZ (Escherichia coli O6:K15:H31 (strain 536 / UPEC)).